Consider the following 1396-residue polypeptide: uncharacterized protein (1396 aa).

88-95 (AYKKWGRS) provides a ligand contact to ATP. Disordered regions lie at residues 146–165 (EKIH…LSPT) and 198–388 (KPCS…VKDL). Over residues 198 to 221 (KPCSYSSSSSSSTVPPASTDTSSP) the composition is skewed to low complexity. Residues 242-268 (MHEKAQSRSRHEKESKLSSSTIEEKPA) show a composition bias toward basic and acidic residues. Over residues 286 to 300 (SWSSGSSEAGSSSSG) the composition is skewed to low complexity. The span at 312–327 (VKVRHKAREIRNRKGR) shows a compositional bias: basic residues. Phosphoserine is present on residues Ser-817 and Ser-1083. The interval 1113–1137 (PISASELSPGGGSESEFESEKDEAS) is disordered. Ser-1197 and Ser-1339 each carry phosphoserine. The interval 1347–1396 (TGERGSETKPNGLHRKMCSSASSDTGDTGSEAGGEWVGPSREELFSRTHL) is disordered. A compositionally biased stretch (low complexity) spans 1365-1376 (SSASSDTGDTGS). Over residues 1386–1396 (SREELFSRTHL) the composition is skewed to basic and acidic residues.

This is an uncharacterized protein from Mus musculus (Mouse).